Reading from the N-terminus, the 305-residue chain is tRNA dimethylallyltransferase (305 aa).

9–16 (GPTASGKS) contacts ATP. 11–16 (TASGKS) serves as a coordination point for substrate. Positions 34–37 (DSKQ) are interaction with substrate tRNA.

It belongs to the IPP transferase family. As to quaternary structure, monomer. Requires Mg(2+) as cofactor.

The catalysed reaction is adenosine(37) in tRNA + dimethylallyl diphosphate = N(6)-dimethylallyladenosine(37) in tRNA + diphosphate. Functionally, catalyzes the transfer of a dimethylallyl group onto the adenine at position 37 in tRNAs that read codons beginning with uridine, leading to the formation of N6-(dimethylallyl)adenosine (i(6)A). This Anaplasma marginale (strain Florida) protein is tRNA dimethylallyltransferase.